A 443-amino-acid chain; its full sequence is Tubulin beta chain (443 aa).

Residues Gln-11, Glu-69, Ser-138, Gly-142, Thr-143, Gly-144, Asn-204, and Asn-226 each coordinate GTP. Residue Glu-69 coordinates Mg(2+). The interval 424–443 (QYQDASAEEEGEFEGEEEEA) is disordered. Over residues 429-443 (SAEEEGEFEGEEEEA) the composition is skewed to acidic residues.

This sequence belongs to the tubulin family. Dimer of alpha and beta chains. A typical microtubule is a hollow water-filled tube with an outer diameter of 25 nm and an inner diameter of 15 nM. Alpha-beta heterodimers associate head-to-tail to form protofilaments running lengthwise along the microtubule wall with the beta-tubulin subunit facing the microtubule plus end conferring a structural polarity. Microtubules usually have 13 protofilaments but different protofilament numbers can be found in some organisms and specialized cells. The cofactor is Mg(2+).

The protein resides in the cytoplasm. The protein localises to the cytoskeleton. In terms of biological role, tubulin is the major constituent of microtubules, a cylinder consisting of laterally associated linear protofilaments composed of alpha- and beta-tubulin heterodimers. Microtubules grow by the addition of GTP-tubulin dimers to the microtubule end, where a stabilizing cap forms. Below the cap, tubulin dimers are in GDP-bound state, owing to GTPase activity of alpha-tubulin. The polypeptide is Tubulin beta chain (TUBB) (Chlamydomonas incerta).